A 144-amino-acid polypeptide reads, in one-letter code: Putative pre-16S rRNA nuclease (144 aa).

This sequence belongs to the YqgF nuclease family.

It is found in the cytoplasm. Could be a nuclease involved in processing of the 5'-end of pre-16S rRNA. This chain is Putative pre-16S rRNA nuclease, found in Chlorobium phaeobacteroides (strain BS1).